The primary structure comprises 1405 residues: DNA-directed RNA polymerase subunit beta' (1405 aa).

Zn(2+)-binding residues include Cys65, Cys67, Cys80, and Cys83. Residues Asp468, Asp470, and Asp472 each contribute to the Mg(2+) site. 4 residues coordinate Zn(2+): Cys811, Cys885, Cys892, and Cys895.

This sequence belongs to the RNA polymerase beta' chain family. The RNAP catalytic core consists of 2 alpha, 1 beta, 1 beta' and 1 omega subunit. When a sigma factor is associated with the core the holoenzyme is formed, which can initiate transcription. The cofactor is Mg(2+). Zn(2+) is required as a cofactor.

The catalysed reaction is RNA(n) + a ribonucleoside 5'-triphosphate = RNA(n+1) + diphosphate. Its function is as follows. DNA-dependent RNA polymerase catalyzes the transcription of DNA into RNA using the four ribonucleoside triphosphates as substrates. The sequence is that of DNA-directed RNA polymerase subunit beta' from Azobacteroides pseudotrichonymphae genomovar. CFP2.